The primary structure comprises 1757 residues: Serine/threonine-protein kinase WNK3 (1757 aa).

A disordered region spans residues 1–25; sequence MATDSGEPASTEDSEKPDGVSFENR. S62 carries the phosphoserine modification. Positions 66-82 are enriched in basic and acidic residues; sequence TEDDKVAESSRRDERKA. The segment at 66–85 is disordered; it reads TEDDKVAESSRRDERKAATN. The Protein kinase domain occupies 146-404; that stretch reads LKFDIELGRG…IKDLLNHAFF (259 aa). Residues 226–229 and K276 contribute to the ATP site; that span reads TELM. D293 functions as the Proton acceptor in the catalytic mechanism. S303 and S307 each carry phosphoserine; by autocatalysis. The interaction with KLHL3 stretch occupies residues 536-546; that stretch reads EYEETEVDQHV. T540 carries the phosphothreonine modification. 3 stretches are compositionally biased toward polar residues: residues 551–570, 578–604, and 674–689; these read LQGK…SSEP, SDTS…KLTQ, and SVKE…SGNG. Disordered stretches follow at residues 551–604 and 674–705; these read LQGK…KLTQ and SVKE…PRPE. A Phosphoserine modification is found at S1039. Residues 1404–1422 show a composition bias toward polar residues; it reads VATEKNVTSTTEVSVQSGS. 3 disordered regions span residues 1404–1440, 1479–1498, and 1536–1574; these read VATE…QTCT, SLFY…EIED, and ATKD…MTHS. The segment covering 1479 to 1491 has biased composition (low complexity); it reads SLFYSPSSPMSSD. Residues S1550 and S1553 each carry the phosphoserine modification. The span at 1555 to 1566 shows a compositional bias: basic residues; it reads RRPRSFKSKLRS. At S1595 the chain carries Phosphoserine. Disordered stretches follow at residues 1621–1650 and 1734–1757; these read HFPS…CEST and PGMN…PGPK. The segment covering 1624–1637 has biased composition (low complexity); it reads SKPSLNQLKQSQQK. Positions 1641-1650 are enriched in polar residues; sequence ENWNKSCEST. Positions 1742 to 1757 are enriched in pro residues; the sequence is PAPPVQNPASIPPGPK.

The protein belongs to the protein kinase superfamily. Ser/Thr protein kinase family. WNK subfamily. Interacts with WNK1 and WNK4. The cofactor is Mg(2+). Autophosphorylated at Ser-303 and Ser-307, promoting its activity. Phosphorylation at Thr-540 prevents interaction with KLHL3 and subsequent ubiquitination and degradation by the BCR(KLHL3) complex. Post-translationally, ubiquitinated by the BCR(KLHL2) complex, leading to its degradation. Ubiquitinated by the BCR(KLHL3) complex, leading to its degradation. Expressed in pancreatic duct.

The protein resides in the cytoplasm. It carries out the reaction L-seryl-[protein] + ATP = O-phospho-L-seryl-[protein] + ADP + H(+). The catalysed reaction is L-threonyl-[protein] + ATP = O-phospho-L-threonyl-[protein] + ADP + H(+). Its activity is regulated as follows. Activated in response to hyperosmotic stress: cell shrinkage promotes formation of a membraneless compartment that concentrates WNK3 with its substrates, OXSR1/OSR1 and STK39/SPAK. Activation requires autophosphorylation of Ser-307 and, to a lower extent, Ser-303. Autophosphorylation and subsequent activation is inhibited by increases in intracellular ionic strength: Cl(-) potently inhibits WNK3 kinase activity via direct binding. Also inhibited by K(+) ions. Kinase activity is inhibited by WNK4. Serine/threonine-protein kinase component of the WNK3-SPAK/OSR1 kinase cascade, which plays an important role in the regulation of electrolyte homeostasis and regulatory volume increase in response to hyperosmotic stress. WNK3 mediates regulatory volume increase in response to hyperosmotic stress by acting as a molecular crowding sensor, which senses cell shrinkage and mediates formation of a membraneless compartment by undergoing liquid-liquid phase separation. The membraneless compartment concentrates WNK3 with its substrates, OXSR1/OSR1 and STK39/SPAK, promoting WNK3-dependent phosphorylation and activation of downstream kinases OXSR1/OSR1 and STK39/SPAK. Following activation, OXSR1/OSR1 and STK39/SPAK catalyze phosphorylation of ion cotransporters SLC12A1/NKCC2, SLC12A2/NKCC1, SLC12A3/NCC, SLC12A4/KCC1, SLC12A5/KCC2 or SLC12A6/KCC3, regulating their activity. Phosphorylation of Na-K-Cl cotransporters SLC12A2/NKCC1 and SLC12A2/NKCC1 promote their activation and ion influx; simultaneously, phosphorylation of K-Cl cotransporters SLC12A4/KCC1, SLC12A5/KCC2 and SLC12A6/KCC3 inhibits its activity, blocking ion efflux. Phosphorylates WNK4, possibly regulating the activity of SLC12A3/NCC. May also phosphorylate NEDD4L. Also acts as a scaffold protein independently of its protein kinase activity: negatively regulates cell membrane localization of various transporters and channels, such as KCNJ1 and SLC26A9. Increases Ca(2+) influx mediated by TRPV5 and TRPV6 by enhancing their membrane expression level via a kinase-dependent pathway. The protein is Serine/threonine-protein kinase WNK3 of Mus musculus (Mouse).